We begin with the raw amino-acid sequence, 220 residues long: MAEYLASIFGTEKDKVNCSFYFKIGACRHGDRCSRLHNKPTFSQTIVLLNLYRNPQNTAQTADGSHCHVSDVEVQEHYDNFFEEVFTELQEKYGEIEEMNVCDNLGDHLVGNVYVKFRREEDAERAVVELNNRWFNGQAVHAELSPVTDFRESCCRQYEMGECTRGGFCNFMHLRPISRDLRRQLYGRGPRRRSPPRSHTGHRPRERNRRRSPDHRHGRF.

Residue Ala2 is modified to N-acetylalanine. The C3H1-type 1 zinc-finger motif lies at 12-40 (EKDKVNCSFYFKIGACRHGDRCSRLHNKP). The region spanning 65 to 147 (SHCHVSDVEV…QAVHAELSPV (83 aa)) is the RRM domain. The C3H1-type 2 zinc-finger motif lies at 149–176 (DFRESCCRQYEMGECTRGGFCNFMHLRP). The disordered stretch occupies residues 186 to 220 (YGRGPRRRSPPRSHTGHRPRERNRRRSPDHRHGRF). The span at 189-220 (GPRRRSPPRSHTGHRPRERNRRRSPDHRHGRF) shows a compositional bias: basic residues.

This sequence belongs to the splicing factor SR family. Interacts with GFI1, U2AF2 and C1QBP.

The protein localises to the nucleus. It is found in the nucleus speckle. It localises to the cytoplasm. In terms of biological role, RNA-binding protein that function as a pre-mRNA splicing factor. Plays a critical role in both constitutive and enhancer-dependent splicing by mediating protein-protein interactions and protein-RNA interactions required for accurate 3'-splice site selection. Acts by enhancing the binding of U2AF2 to weak pyrimidine tracts. Also participates in the regulation of alternative pre-mRNA splicing. Activates exon 5 skipping of PTPRC during T-cell activation; an event reversed by GFI1. Binds to RNA at the AG dinucleotide at the 3'-splice site. Shows a preference for AGC or AGA. The polypeptide is Splicing factor U2AF 26 kDa subunit (U2AF1L4) (Bos taurus (Bovine)).